The chain runs to 99 residues: Microcin E492 (99 aa).

The signal sequence occupies residues Met1–Ala15. The interval Ser80 to Ser99 is disordered. Residues Gly87 to Ser99 are compositionally biased toward low complexity. A Serine microcin E492 siderophore ester modification is found at Ser99.

This sequence belongs to the class IIa microcin family. As to quaternary structure, multimer. Possibly forms a homodimer or a homotrimer. The C-terminal Ser is modified by attachment to a siderophore similar to enterobactin, which can bind one atom of iron. The modification consists of an ester linkage of the serine carboxyl to O6 of a glucose which is linked by a C-glycosidic bond to the 5'-benzoyl of a linear triester of N-(2,3-dihydroxybenzoyl)serine. Presence of the siderophore ester increases the antibacterial activity of the protein.

Functionally, channel-forming bacteriocin. Forms cation-selective channels. Active on enterobacteria, with highest activity against E.coli. Not active on other Gram-negative bacteria, Gram-positive bacteria or fungi. The unmodified protein is active against E.coli and S.enteritidis. When the siderophore ester is present at Ser-99, antibacterial activity against these species is increased and activity is also detected against E.cloacae and K.pneumoniae. Neutralized by its immunity protein MceB. The sequence is that of Microcin E492 from Klebsiella pneumoniae.